Consider the following 149-residue polypeptide: FAD synthase (149 aa).

ATP-binding positions include 9–10 (TF), 14–17 (HPGH), asparagine 92, and tyrosine 119.

This sequence belongs to the archaeal FAD synthase family. Homodimer. A divalent metal cation serves as cofactor.

The catalysed reaction is FMN + ATP + H(+) = FAD + diphosphate. The protein operates within cofactor biosynthesis; FAD biosynthesis; FAD from FMN: step 1/1. In terms of biological role, catalyzes the transfer of the AMP portion of ATP to flavin mononucleotide (FMN) to produce flavin adenine dinucleotide (FAD) coenzyme. The chain is FAD synthase from Methanoculleus marisnigri (strain ATCC 35101 / DSM 1498 / JR1).